The primary structure comprises 308 residues: Adipolin (308 aa).

A signal peptide spans 1-21 (MWAWGWAAAALLWLQTAGAGA). The disordered stretch occupies residues 36–119 (DSPNITTSNR…PPGSPGVGVT (84 aa)). The N-linked (GlcNAc...) asparagine glycan is linked to asparagine 39. The segment covering 82 to 93 (RKRCRGRDKKSR) has biased composition (basic residues). Over residues 99-113 (PGPPGPPGPPGPPGS) the composition is skewed to pro residues. Residues 153–308 (QRLVVEAFYC…SSFSGMLLGT (156 aa)) enclose the C1q domain.

This sequence belongs to the adipolin/erythroferrone family. In terms of assembly, homomultimer; disulfide-linked. Adipolin fC1QTNF12: homotrimer; disulfide-linked. Adipolin gC1QTNF12: homodimer; disulfide-linked. May interact with ERFE. In terms of processing, processed into Adipolin fC1QTNF12 and Adipolin gC1QTNF12 by FURIN. Insulin enhances endogenous C1QTNF12 cleavage. In terms of tissue distribution, widely expressed, with high expression in subcutaneous and epididymal white adipose tissues and brown adipose tissue. Expressed in adipocytes (at protein level).

Its subcellular location is the secreted. Insulin-sensitizing adipocyte-secreted protein (adipokine) that regulates glucose metabolism in liver and adipose tissue. Promotes glucose uptake in adipocytes and suppresses de novo glucose production in hepatocytes via the PI3K-Akt signaling pathway. Administration lead to reduction of blood glucose. Able to attenuate inflammation in fat tissue. Its function is as follows. Acts by activating the Akt signaling in hepatocytes and adipocytes. Not able to increase insulin-stimulated glucose uptake in adipocytes. Functionally, acts by activating the MAP kinase. Increases insulin-stimulated glucose uptake in adipocytes. The polypeptide is Adipolin (C1qtnf12) (Mus musculus (Mouse)).